The chain runs to 641 residues: Calpain-6 (641 aa).

The Calpain catalytic domain occupies 26 to 343 (LFCDPTFLPE…FHKLNVCRNV (318 aa)). A domain III region spans residues 344–495 (NNPVFGRKEL…IFSEVPVQLR (152 aa)). The 124-residue stretch at 498-621 (TLDMPKMSCW…YLRKKGGPTA (124 aa)) folds into the C2 domain.

It belongs to the peptidase C2 family. Interacts (via domain III) with microtubules. Interacts (via domain II) with ARHGEF2 (via the N-terminal zinc finger).

The protein resides in the cytoplasm. The protein localises to the perinuclear region. It localises to the cytoskeleton. It is found in the spindle. Functionally, microtubule-stabilizing protein that may be involved in the regulation of microtubule dynamics and cytoskeletal organization. May act as a regulator of RAC1 activity through interaction with ARHGEF2 to control lamellipodial formation and cell mobility. Does not seem to have protease activity as it has lost the active site residues. The chain is Calpain-6 (Capn6) from Rattus norvegicus (Rat).